A 354-amino-acid chain; its full sequence is GTPase Obg (354 aa).

Positions M1–L159 constitute an Obg domain. Residues A160–F333 form the OBG-type G domain. GTP contacts are provided by residues G166–S173, F191–T195, D212–G215, T283–D286, and S314–V316. Positions 173 and 193 each coordinate Mg(2+).

It belongs to the TRAFAC class OBG-HflX-like GTPase superfamily. OBG GTPase family. Monomer. Requires Mg(2+) as cofactor.

It localises to the cytoplasm. Its function is as follows. An essential GTPase which binds GTP, GDP and possibly (p)ppGpp with moderate affinity, with high nucleotide exchange rates and a fairly low GTP hydrolysis rate. Plays a role in control of the cell cycle, stress response, ribosome biogenesis and in those bacteria that undergo differentiation, in morphogenesis control. This Anaeromyxobacter sp. (strain K) protein is GTPase Obg.